The chain runs to 250 residues: uncharacterized protein (250 aa).

A helical membrane pass occupies residues 2–22 (ILRIIIFVIIILVVSLLLIYF).

The protein resides in the membrane. This is an uncharacterized protein from Acanthamoeba polyphaga (Amoeba).